The sequence spans 252 residues: Phosphate import ATP-binding protein PstB (252 aa).

An ABC transporter domain is found at 6-247 (ITINNLNFYY…PRDKRTEDYI (242 aa)). Residue 38-45 (GPSGCGKS) participates in ATP binding.

It belongs to the ABC transporter superfamily. Phosphate importer (TC 3.A.1.7) family. In terms of assembly, the complex is composed of two ATP-binding proteins (PstB), two transmembrane proteins (PstC and PstA) and a solute-binding protein (PstS).

It localises to the cell membrane. It carries out the reaction phosphate(out) + ATP + H2O = ADP + 2 phosphate(in) + H(+). Its function is as follows. Part of the ABC transporter complex PstSACB involved in phosphate import. Responsible for energy coupling to the transport system. The sequence is that of Phosphate import ATP-binding protein PstB from Moorella thermoacetica (strain ATCC 39073 / JCM 9320).